We begin with the raw amino-acid sequence, 240 residues long: RxLR effector protein PexRD20 (240 aa).

Positions 1-23 (MRCHYFVLLAVAAFLAGANVAVA) are cleaved as a signal peptide. The RxLR-dEER motif lies at 43-58 (RALRSHTKATDHGEER).

It belongs to the RxLR effector family.

The protein localises to the secreted. Its subcellular location is the host cytoplasm. The protein resides in the host nucleus. It localises to the host nucleolus. Its function is as follows. Effector that enhances P.infestans colonization of Nicotiana benthamiana leaves. The protein is RxLR effector protein PexRD20 of Phytophthora infestans (strain T30-4) (Potato late blight agent).